A 373-amino-acid chain; its full sequence is Dynein regulatory complex protein 9 (373 aa).

Positions 145 to 200 form a coiled coil; that stretch reads EQAMKETIEREKNTTAAVRQLRNDLREEKLDHEEKMKEKKKGLSTLKEQLKALKMD. Residues 336–365 form the IQ domain; it reads RAQAAVIIQAWWRGHKVRMVMSGGGKKGAK.

It belongs to the DRC9 family. In terms of assembly, component of the nexin-dynein regulatory complex (N-DRC).

It localises to the cytoplasm. It is found in the cytoskeleton. Its subcellular location is the flagellum axoneme. Functionally, component of the nexin-dynein regulatory complex (N-DRC), a key regulator of ciliary/flagellar motility which maintains the alignment and integrity of the distal axoneme and regulates microtubule sliding in motile axonemes. The polypeptide is Dynein regulatory complex protein 9 (Chlamydomonas reinhardtii (Chlamydomonas smithii)).